Consider the following 188-residue polypeptide: Mitochondrial import inner membrane translocase subunit Tim23B (188 aa).

Transmembrane regions (helical) follow at residues 73–93 (FELAFFTIGGCCMTGAAFGAM) and 125–145 (ALWANTLGSLALLYSAFGVII).

The protein belongs to the Tim17/Tim22/Tim23 family.

The protein resides in the mitochondrion inner membrane. In terms of biological role, may participate in the translocation of transit peptide-containing proteins across the mitochondrial inner membrane. the PAM complex. The polypeptide is Mitochondrial import inner membrane translocase subunit Tim23B (Homo sapiens (Human)).